A 412-amino-acid chain; its full sequence is Transcription termination factor 3, mitochondrial (412 aa).

The transit peptide at methionine 1–asparagine 67 directs the protein to the mitochondrion.

This sequence belongs to the mTERF family.

The protein localises to the mitochondrion. Functionally, binds promoter DNA and regulates initiation of transcription. Required for normal mitochondrial transcription and translation, and for normal assembly of mitochondrial respiratory complexes. Required for normal mitochondrial function. Maintains 16S rRNA levels and functions in mitochondrial ribosome assembly by regulating the biogenesis of the 39S ribosomal subunit. The protein is Transcription termination factor 3, mitochondrial (Mterf3) of Mus musculus (Mouse).